A 184-amino-acid chain; its full sequence is ATP-dependent protease subunit HslV (184 aa).

Residue T12 is part of the active site. Residues A167, C170, and T173 each contribute to the Na(+) site.

It belongs to the peptidase T1B family. HslV subfamily. As to quaternary structure, a double ring-shaped homohexamer of HslV is capped on each side by a ring-shaped HslU homohexamer. The assembly of the HslU/HslV complex is dependent on binding of ATP.

It is found in the cytoplasm. It catalyses the reaction ATP-dependent cleavage of peptide bonds with broad specificity.. Allosterically activated by HslU binding. Its function is as follows. Protease subunit of a proteasome-like degradation complex believed to be a general protein degrading machinery. The protein is ATP-dependent protease subunit HslV of Wolbachia pipientis subsp. Culex pipiens (strain wPip).